The sequence spans 443 residues: Probable glycine dehydrogenase (decarboxylating) subunit 1 (443 aa).

It belongs to the GcvP family. N-terminal subunit subfamily. The glycine cleavage system is composed of four proteins: P, T, L and H. In this organism, the P 'protein' is a heterodimer of two subunits.

It carries out the reaction N(6)-[(R)-lipoyl]-L-lysyl-[glycine-cleavage complex H protein] + glycine + H(+) = N(6)-[(R)-S(8)-aminomethyldihydrolipoyl]-L-lysyl-[glycine-cleavage complex H protein] + CO2. In terms of biological role, the glycine cleavage system catalyzes the degradation of glycine. The P protein binds the alpha-amino group of glycine through its pyridoxal phosphate cofactor; CO(2) is released and the remaining methylamine moiety is then transferred to the lipoamide cofactor of the H protein. This is Probable glycine dehydrogenase (decarboxylating) subunit 1 from Oleidesulfovibrio alaskensis (strain ATCC BAA-1058 / DSM 17464 / G20) (Desulfovibrio alaskensis).